The following is a 483-amino-acid chain: Phosphoglucosamine mutase (483 aa).

The active-site Phosphoserine intermediate is the serine 131. Residues serine 131, aspartate 272, aspartate 274, and aspartate 276 each coordinate Mg(2+). At serine 131 the chain carries Phosphoserine.

The protein belongs to the phosphohexose mutase family. Mg(2+) serves as cofactor. Activated by phosphorylation.

The catalysed reaction is alpha-D-glucosamine 1-phosphate = D-glucosamine 6-phosphate. Catalyzes the conversion of glucosamine-6-phosphate to glucosamine-1-phosphate. The sequence is that of Phosphoglucosamine mutase from Magnetococcus marinus (strain ATCC BAA-1437 / JCM 17883 / MC-1).